Consider the following 525-residue polypeptide: UPF0288 protein MM_0912 (525 aa).

Belongs to the UPF0288 family.

This Methanosarcina mazei (strain ATCC BAA-159 / DSM 3647 / Goe1 / Go1 / JCM 11833 / OCM 88) (Methanosarcina frisia) protein is UPF0288 protein MM_0912.